Here is a 399-residue protein sequence, read N- to C-terminus: CCA-adding enzyme (399 aa).

ATP is bound by residues G32 and R35. G32 and R35 together coordinate CTP. Mg(2+) is bound by residues D45 and D47. ATP contacts are provided by R116, D159, R162, R165, and R168. The CTP site is built by R116, D159, R162, R165, and R168.

Belongs to the tRNA nucleotidyltransferase/poly(A) polymerase family. Bacterial CCA-adding enzyme type 3 subfamily. In terms of assembly, homodimer. It depends on Mg(2+) as a cofactor.

The catalysed reaction is a tRNA precursor + 2 CTP + ATP = a tRNA with a 3' CCA end + 3 diphosphate. The enzyme catalyses a tRNA with a 3' CCA end + 2 CTP + ATP = a tRNA with a 3' CCACCA end + 3 diphosphate. In terms of biological role, catalyzes the addition and repair of the essential 3'-terminal CCA sequence in tRNAs without using a nucleic acid template. Adds these three nucleotides in the order of C, C, and A to the tRNA nucleotide-73, using CTP and ATP as substrates and producing inorganic pyrophosphate. tRNA 3'-terminal CCA addition is required both for tRNA processing and repair. Also involved in tRNA surveillance by mediating tandem CCA addition to generate a CCACCA at the 3' terminus of unstable tRNAs. While stable tRNAs receive only 3'-terminal CCA, unstable tRNAs are marked with CCACCA and rapidly degraded. The polypeptide is CCA-adding enzyme (Streptococcus pneumoniae (strain CGSP14)).